We begin with the raw amino-acid sequence, 319 residues long: N-acetyl-D-glucosamine kinase (319 aa).

Thr-14 is a binding site for ATP. Residues Asn-37 and Asp-113 each contribute to the substrate site. Residue Thr-135 participates in ATP binding. Substrate contacts are provided by residues Gly-153–Gly-155 and Asp-160. Ala-220 is a binding site for ATP.

It belongs to the eukaryotic-type N-acetylglucosamine kinase family. In terms of assembly, homodimer.

The catalysed reaction is N-acetyl-D-glucosamine + ATP = N-acetyl-D-glucosamine 6-phosphate + ADP + H(+). In terms of biological role, converts N-acetylglucosamine (GlcNAc), a major component of complex carbohydrates, into GlcNAc 6-phosphate. Also has ManNAc kinase activity. The protein is N-acetyl-D-glucosamine kinase (nagk) of Dictyostelium discoideum (Social amoeba).